We begin with the raw amino-acid sequence, 425 residues long: Dihydroorotase (425 aa).

His61 and His63 together coordinate Zn(2+). Substrate-binding positions include His63–Arg65 and Asn95. Residues Asp153, His180, and His233 each contribute to the Zn(2+) site. A substrate-binding site is contributed by Asn279. Position 306 (Asp306) interacts with Zn(2+). Asp306 is an active-site residue. Position 310 (His310) interacts with substrate.

Belongs to the metallo-dependent hydrolases superfamily. DHOase family. Class I DHOase subfamily. Requires Zn(2+) as cofactor.

It catalyses the reaction (S)-dihydroorotate + H2O = N-carbamoyl-L-aspartate + H(+). The protein operates within pyrimidine metabolism; UMP biosynthesis via de novo pathway; (S)-dihydroorotate from bicarbonate: step 3/3. Catalyzes the reversible cyclization of carbamoyl aspartate to dihydroorotate. In Geobacter sulfurreducens (strain ATCC 51573 / DSM 12127 / PCA), this protein is Dihydroorotase.